Reading from the N-terminus, the 462-residue chain is Prenyltransferase phqI (462 aa).

Glu101 is a brevianamide F binding site. Dimethylallyl diphosphate contacts are provided by Arg117, Lys204, Tyr206, Lys273, Tyr275, Tyr357, Tyr442, and Tyr446.

This sequence belongs to the tryptophan dimethylallyltransferase family.

It functions in the pathway alkaloid biosynthesis. In terms of biological role, prenyltransferase; part of the gene cluster that mediates the biosynthesis of paraherquamide, a fungal indole alkaloid that belongs to a family of natural products containing a characteristic bicyclo[2.2.2]diazaoctane core. The first steps in the biosynthesis of paraherquamide is the production of the beta-methyl-proline precursor from L-isoleucine. They require oxidation of a terminally hydroxylated L-isoleucine to the corresponding aldehyde by enzymes which have still to be identified. Spontaneous cyclization and dehydration would yield the 4-methyl pyrolline-5-carboxylic acid, which is then reduced by the pyrroline-5-carboxylate reductase phqD leading to the beta-methyl-proline precursor. The next step of paraherquamide biosynthesis involves coupling of beta-methyl-proline and L-tryptophan by the bimodular NRPS phqB, to produce a monooxopiperazine intermediate. The reductase (R) domain of phqB utilizes NADPH for hydride transfer to reduce the thioester bond of the T domain-tethered linear dipeptide to a hemithioaminal intermediate, which spontaneously cleaves the C-S bond to release the aldehyde product. This compound undergoes spontaneous cyclization and dehydration to give a dienamine which is reverse prenylated at C-2 by the reverse prenyltransferase phqJ. The other prenyltransferase present in the cluster, phqI may be a redundant gene in the pathway. During biosynthetic assembly, the key step to produce the polycyclic core is catalyzed by the bifunctional reductase and intramolecular [4+2] Diels-Alderase, phqE, resulting in formation of the [2.2.2] diazaoctane intermediate preparaherquamide. Following formation of preparaherquamide, an indole 2,3-epoxidation-initiated pinacol-like rearrangement is catalyzed by the phqK FAD-dependent monooxygenase. The prenyltransferase phqA, the cytochrome P450 monooxygenase phqL, and the FAD-linked oxidoreductase phqH (or the cytochrome P450 monooxygenase phqM), are proposed to be involved in the formation of the pyran ring. The FAD-dependent monooxygenase phqK is likely responsible for generation of the spiro-oxindole, and the N-methylation is likely mediated by the phqN methyltransferase leading to the isolable natural product paraherquamide F. However, the order of these biosynthetic steps has still to be determined. In late-stage paraherquamide biosynthesis, the third P450 monooxygenase, phqO, is probably responsible for the C-14 hydroxylation, transforming paraherquamide F to paraherquamide G, and paraherquamide E to the final product paraherquamide A. The expansion from the 6-membered ring pyran (in paraherquamides F and G) to the 7-membered dioxepin ring (in paraherquamides A and E) represents a poorly understood but intriguing process that probably involves the 2-oxoglutarate-dependent dioxygenase phqC. Finally, the remaining members of the paraherquamide cluster, including phqI as well as phqM (or phqH), do not have a clearly prescribed role and appear to be redundant. In Penicillium fellutanum, this protein is Prenyltransferase phqI.